We begin with the raw amino-acid sequence, 389 residues long: Succinate--CoA ligase [ADP-forming] subunit beta (389 aa).

Positions 9–236 (KELFAKHEVP…KDATDPLELK (228 aa)) constitute an ATP-grasp domain. ATP-binding positions include K45, 52-54 (GRG), S94, and E99. Mg(2+)-binding residues include N191 and D205. Residues N256 and 318 to 320 (GIT) contribute to the substrate site.

Belongs to the succinate/malate CoA ligase beta subunit family. In terms of assembly, heterotetramer of two alpha and two beta subunits. It depends on Mg(2+) as a cofactor.

It carries out the reaction succinate + ATP + CoA = succinyl-CoA + ADP + phosphate. The enzyme catalyses GTP + succinate + CoA = succinyl-CoA + GDP + phosphate. Its pathway is carbohydrate metabolism; tricarboxylic acid cycle; succinate from succinyl-CoA (ligase route): step 1/1. Functionally, succinyl-CoA synthetase functions in the citric acid cycle (TCA), coupling the hydrolysis of succinyl-CoA to the synthesis of either ATP or GTP and thus represents the only step of substrate-level phosphorylation in the TCA. The beta subunit provides nucleotide specificity of the enzyme and binds the substrate succinate, while the binding sites for coenzyme A and phosphate are found in the alpha subunit. The polypeptide is Succinate--CoA ligase [ADP-forming] subunit beta (Rhodococcus jostii (strain RHA1)).